The following is a 246-amino-acid chain: Large ribosomal subunit protein uL30 (246 aa).

M1 carries the post-translational modification N-acetylmethionine. Tandem repeats lie at residues 7–17 (KKVPSVPESLL), 18–28 (KRRQAYAAAKA), 29–40 (KRLKRLLAQKKF), and 41–52 (RKAQRKIIYERA). A 4 X 12 AA tandem repeats region spans residues 7–52 (KKVPSVPESLLKRRQAYAAAKAKRLKRLLAQKKFRKAQRKIIYERA).

The protein belongs to the universal ribosomal protein uL30 family. In terms of assembly, component of the large ribosomal subunit.

The protein resides in the cytoplasm. Functionally, component of the large ribosomal subunit. The ribosome is a large ribonucleoprotein complex responsible for the synthesis of proteins in the cell. Binds to G-rich structures in 28S rRNA and in mRNAs. Plays a regulatory role in the translation apparatus; inhibits cell-free translation of mRNAs. This Gallus gallus (Chicken) protein is Large ribosomal subunit protein uL30 (RPL7).